Here is a 1057-residue protein sequence, read N- to C-terminus: Outer capsid protein VP2 (1057 aa).

It belongs to the orbivirus VP2 family.

The protein resides in the virion. Functionally, the VP2 protein is one of the two proteins (with VP5) which constitute the virus particle outer capsid. It is the major target of the host immunogenic response. This is Outer capsid protein VP2 (Segment-2) from Anas (ducks).